We begin with the raw amino-acid sequence, 233 residues long: Glucosamine-6-phosphate deaminase (233 aa).

The active-site Proton acceptor; for enolization step is D62. The active-site For ring-opening step is N128. The active-site Proton acceptor; for ring-opening step is the H130. Catalysis depends on E135, which acts as the For ring-opening step.

This sequence belongs to the glucosamine/galactosamine-6-phosphate isomerase family. NagB subfamily.

It carries out the reaction alpha-D-glucosamine 6-phosphate + H2O = beta-D-fructose 6-phosphate + NH4(+). The protein operates within amino-sugar metabolism; N-acetylneuraminate degradation; D-fructose 6-phosphate from N-acetylneuraminate: step 5/5. In terms of biological role, catalyzes the reversible isomerization-deamination of glucosamine 6-phosphate (GlcN6P) to form fructose 6-phosphate (Fru6P) and ammonium ion. The polypeptide is Glucosamine-6-phosphate deaminase (Streptococcus pneumoniae serotype 4 (strain ATCC BAA-334 / TIGR4)).